The chain runs to 202 residues: Pyrrolidone-carboxylate peptidase (202 aa).

Active-site residues include glutamate 78, cysteine 141, and histidine 165.

This sequence belongs to the peptidase C15 family. Homotetramer.

The protein resides in the cytoplasm. The catalysed reaction is Release of an N-terminal pyroglutamyl group from a polypeptide, the second amino acid generally not being Pro.. Removes 5-oxoproline from various penultimate amino acid residues except L-proline. In Thermosipho melanesiensis (strain DSM 12029 / CIP 104789 / BI429), this protein is Pyrrolidone-carboxylate peptidase.